Consider the following 277-residue polypeptide: Large ribosomal subunit protein uL2 (277 aa).

Positions Asp-199–Ser-277 are disordered.

The protein belongs to the universal ribosomal protein uL2 family. Part of the 50S ribosomal subunit. Forms a bridge to the 30S subunit in the 70S ribosome.

Its function is as follows. One of the primary rRNA binding proteins. Required for association of the 30S and 50S subunits to form the 70S ribosome, for tRNA binding and peptide bond formation. It has been suggested to have peptidyltransferase activity; this is somewhat controversial. Makes several contacts with the 16S rRNA in the 70S ribosome. The chain is Large ribosomal subunit protein uL2 from Mesorhizobium japonicum (strain LMG 29417 / CECT 9101 / MAFF 303099) (Mesorhizobium loti (strain MAFF 303099)).